The primary structure comprises 459 residues: Bifunctional protein GlmU (459 aa).

Positions Met1 to Arg230 are pyrophosphorylase. UDP-N-acetyl-alpha-D-glucosamine is bound by residues Leu9–Gly12, Lys23, Gln73, and Gly78–Thr79. Asp103 provides a ligand contact to Mg(2+). Gly140, Glu155, Asn170, and Asn228 together coordinate UDP-N-acetyl-alpha-D-glucosamine. Residue Asn228 coordinates Mg(2+). The interval Val231–Asn251 is linker. The interval Gly252 to Ser459 is N-acetyltransferase. UDP-N-acetyl-alpha-D-glucosamine-binding residues include Arg333 and Lys351. The active-site Proton acceptor is His363. UDP-N-acetyl-alpha-D-glucosamine contacts are provided by Tyr366 and Asn377. Acetyl-CoA contacts are provided by residues Asn386–Tyr387, Ala423, and Arg440.

In the N-terminal section; belongs to the N-acetylglucosamine-1-phosphate uridyltransferase family. It in the C-terminal section; belongs to the transferase hexapeptide repeat family. In terms of assembly, homotrimer. It depends on Mg(2+) as a cofactor.

It is found in the cytoplasm. The enzyme catalyses alpha-D-glucosamine 1-phosphate + acetyl-CoA = N-acetyl-alpha-D-glucosamine 1-phosphate + CoA + H(+). The catalysed reaction is N-acetyl-alpha-D-glucosamine 1-phosphate + UTP + H(+) = UDP-N-acetyl-alpha-D-glucosamine + diphosphate. It functions in the pathway nucleotide-sugar biosynthesis; UDP-N-acetyl-alpha-D-glucosamine biosynthesis; N-acetyl-alpha-D-glucosamine 1-phosphate from alpha-D-glucosamine 6-phosphate (route II): step 2/2. Its pathway is nucleotide-sugar biosynthesis; UDP-N-acetyl-alpha-D-glucosamine biosynthesis; UDP-N-acetyl-alpha-D-glucosamine from N-acetyl-alpha-D-glucosamine 1-phosphate: step 1/1. It participates in bacterial outer membrane biogenesis; LPS lipid A biosynthesis. Functionally, catalyzes the last two sequential reactions in the de novo biosynthetic pathway for UDP-N-acetylglucosamine (UDP-GlcNAc). The C-terminal domain catalyzes the transfer of acetyl group from acetyl coenzyme A to glucosamine-1-phosphate (GlcN-1-P) to produce N-acetylglucosamine-1-phosphate (GlcNAc-1-P), which is converted into UDP-GlcNAc by the transfer of uridine 5-monophosphate (from uridine 5-triphosphate), a reaction catalyzed by the N-terminal domain. This chain is Bifunctional protein GlmU, found in Bacillus cereus (strain ATCC 14579 / DSM 31 / CCUG 7414 / JCM 2152 / NBRC 15305 / NCIMB 9373 / NCTC 2599 / NRRL B-3711).